The sequence spans 103 residues: Small ribosomal subunit protein uS10 (103 aa).

It belongs to the universal ribosomal protein uS10 family. As to quaternary structure, part of the 30S ribosomal subunit.

Functionally, involved in the binding of tRNA to the ribosomes. This is Small ribosomal subunit protein uS10 from Thioalkalivibrio sulfidiphilus (strain HL-EbGR7).